A 147-amino-acid chain; its full sequence is MKVIFLQDVKGQGKKDEIKEISDGYARNFLIPKGLVKLATEGSVKTVKNRKIVQEQEKDLAIAETKQLKTLLEEIILKFKLQINEGKAFHSISNQDIVDQLKNSHKIDLDKRKFVNFKNLNQIGLHYIVIKLGFGIEAKLKVEIQGV.

This sequence belongs to the bacterial ribosomal protein bL9 family.

Its function is as follows. Binds to the 23S rRNA. The sequence is that of Large ribosomal subunit protein bL9 from Mesoplasma florum (strain ATCC 33453 / NBRC 100688 / NCTC 11704 / L1) (Acholeplasma florum).